The sequence spans 167 residues: Signal peptidase complex subunit 2 (167 aa).

The Cytoplasmic portion of the chain corresponds to 1–36 (MPKYNVSDFKSKFDKELTNHFNKNGYKQSFVFEDIR). Residues 37–57 (LLIAIACIIPAGLAFGIEYVY) traverse the membrane as a helical segment. Topologically, residues 58-68 (GFGVLKSYLKY) are lumenal. Residues 69–89 (LLPLYFLASCLLTFWSSVVKG) traverse the membrane as a helical segment. Over 90-167 (STVYVATKKE…ISKYLSQIEN (78 aa)) the chain is Cytoplasmic.

The protein belongs to the SPCS2 family. Component of the signal peptidase complex (SPC) composed of a catalytic subunit sec11 and three accessory subunits spc1, spc2 and spc3. The complex induces a local thinning of the ER membrane which is used to measure the length of the signal peptide (SP) h-region of protein substrates. This ensures the selectivity of the complex towards h-regions shorter than 18-20 amino acids. SPC associates with the translocon complex.

It localises to the endoplasmic reticulum membrane. Its function is as follows. Component of the signal peptidase complex (SPC) which catalyzes the cleavage of N-terminal signal sequences from nascent proteins as they are translocated into the lumen of the endoplasmic reticulum. Enhances the enzymatic activity of SPC and facilitates the interactions between different components of the translocation site. This is Signal peptidase complex subunit 2 (spc2) from Schizosaccharomyces pombe (strain 972 / ATCC 24843) (Fission yeast).